A 583-amino-acid chain; its full sequence is Moesin/ezrin/radixin homolog 1 (583 aa).

Residues 11-301 (MNVRVTTMDA…GNHELYMRRR (291 aa)) form the FERM domain. Disordered regions lie at residues 466 to 518 (TTTP…RTLA) and 539 to 558 (RDDT…VRQG). Acidic residues predominate over residues 476-485 (EEEEDNEEEL). Over residues 496 to 518 (DYSKDFDTDEHIKDPVEERRTLA) the composition is skewed to basic and acidic residues. Position 564 is a phosphothreonine (Thr-564).

In terms of assembly, interacts with cytoskeletal actin.

The protein localises to the cell junction. It localises to the adherens junction. The protein resides in the cell projection. Its subcellular location is the microvillus. It is found in the rhabdomere. The protein localises to the cell membrane. It localises to the cytoplasm. The protein resides in the cytoskeleton. Its function is as follows. Involved in connections of major cytoskeletal structures to the plasma membrane. The protein is Moesin/ezrin/radixin homolog 1 of Aedes aegypti (Yellowfever mosquito).